The primary structure comprises 209 residues: Peroxynitrite isomerase 2 (209 aa).

The GXWXGXG motif lies at 56-62 (GVWRGEG). Heme b-binding residues include K172 and H199.

This sequence belongs to the nitrobindin family. Homodimer. It depends on heme b as a cofactor.

It carries out the reaction peroxynitrite = nitrate. It functions in the pathway nitrogen metabolism. In terms of biological role, heme-binding protein able to scavenge peroxynitrite and to protect free L-tyrosine against peroxynitrite-mediated nitration, by acting as a peroxynitrite isomerase that converts peroxynitrite to nitrate. Therefore, this protein likely plays a role in peroxynitrite sensing and in the detoxification of reactive nitrogen and oxygen species (RNS and ROS, respectively). Is able to bind nitric oxide (NO) in vitro, but may act as a sensor of peroxynitrite levels in vivo. This is Peroxynitrite isomerase 2 from Mycolicibacterium vanbaalenii (strain DSM 7251 / JCM 13017 / BCRC 16820 / KCTC 9966 / NRRL B-24157 / PYR-1) (Mycobacterium vanbaalenii).